The sequence spans 661 residues: MLLFRATLLPSPPFFHKTYFSHLSPVIFSDDPLPVSLQRNRVSGCRKQKWRQIRTLALQSDTLSEVRSAPPELNVERNKFRILIAGGGIGGLVLALAAKKKGFDALVFEKDMSAIRGEGQYRGPIQIQSNALAALEAIDSQVAEEVMGTGCITGDRINGLVDGVSGTWYIKFDTFTPAAERGLPVTRVISRMSLQQILARAVGDDAILSDSKIVDFVDYGNKVAVILENGQQYEGDLLVGADGIWSKVREILFGYSEPSYSGYTCYTGIADFVPPDIDTVGYRVFLGHKQYFVSSDVGAGKMQWYAFHNEPPSGSDVPNGKKEILLKIFNGWCDNVIDLINATEEELILRRDIYDRIPIFTWGKGRVTLLGDSVHAMQPNMGQGGCMAIEDSYQLAHELEKARKESIQSRKPMDVKSALKRYEKERRLRVAVIYGMARMAAIMASTYRPYLGVGLGPLSFLTKYKIPHPGRTSGRLVIKYAMPLMLSWVLGGNSSKLEGRSLTCRLSDKASDQLRKWFEDDDALERALGGEWYLFPLNNGDIQPIRLVRDDKRFHIIGSISHDDSEGISIHLPFPQVHKTHARIACKDNIFYLTDLQSQYGTWITDNEGRRYQAPPNVPVRFRSSYSIEFGSDKKVVFKVKVLSTSHKSAVYGGQNLSPVV.

The N-terminal 59 residues, Met-1–Gln-59, are a transit peptide targeting the chloroplast. Residues Arg-81 to Glu-109 and Ile-359 to Asp-372 contribute to the FAD site. The 55-residue stretch at His-555 to Gly-609 folds into the FHA domain.

Requires FAD as cofactor. Expressed in flower buds, lips and leaves. Detected in roots.

It localises to the plastid. The protein resides in the chloroplast. The catalysed reaction is all-trans-zeaxanthin + 4 reduced [2Fe-2S]-[ferredoxin] + 2 O2 + 4 H(+) = all-trans-violaxanthin + 4 oxidized [2Fe-2S]-[ferredoxin] + 2 H2O. It functions in the pathway plant hormone biosynthesis; abscisate biosynthesis. Functionally, zeaxanthin epoxidase that plays an important role in the xanthophyll cycle and abscisic acid (ABA) biosynthesis. Converts zeaxanthin into antheraxanthin and subsequently violaxanthin. This chain is Zeaxanthin epoxidase, chloroplastic (ZEP), found in Oncidium hybrid cultivar (Orchid).